We begin with the raw amino-acid sequence, 217 residues long: Dual specificity phosphatase 29 (217 aa).

The 149-residue stretch at 46–194 (HVNEVWPNLY…LRELDIKLAL (149 aa)) folds into the Tyrosine-protein phosphatase domain. 138-145 (HCAMGRSR) is a binding site for substrate. The active-site Phosphocysteine intermediate is the Cys-139.

The protein belongs to the protein-tyrosine phosphatase family. Non-receptor class dual specificity subfamily.

It localises to the cytoplasm. Its subcellular location is the nucleus. It catalyses the reaction O-phospho-L-tyrosyl-[protein] + H2O = L-tyrosyl-[protein] + phosphate. The catalysed reaction is O-phospho-L-seryl-[protein] + H2O = L-seryl-[protein] + phosphate. The enzyme catalyses O-phospho-L-threonyl-[protein] + H2O = L-threonyl-[protein] + phosphate. Functionally, dual specificity phosphatase able to dephosphorylate phosphotyrosine, phosphoserine and phosphothreonine residues within the same substrate, with a preference for phosphotyrosine as a substrate. Involved in the modulation of AMPK and MAPK1/2 signaling pathways. This is Dual specificity phosphatase 29 (DUSP29) from Anolis carolinensis (Green anole).